Consider the following 83-residue polypeptide: Putative beta-neurotoxin RjAa10f (83 aa).

An N-terminal signal peptide occupies residues 1 to 18; the sequence is MKILIFIIASFMLIGVWC. The LCN-type CS-alpha/beta domain maps to 19–82; that stretch reads KEGYPMGRDG…VWDPNNNKCV (64 aa). Intrachain disulfides connect C29-C81, C33-C55, C40-C62, and C44-C64.

Belongs to the long (4 C-C) scorpion toxin superfamily. Sodium channel inhibitor family. Beta subfamily. Expressed by the venom gland.

Its subcellular location is the secreted. In terms of biological role, beta toxins bind voltage-independently at site-4 of sodium channels (Nav) and shift the voltage of activation toward more negative potentials thereby affecting sodium channel activation and promoting spontaneous and repetitive firing. This is Putative beta-neurotoxin RjAa10f from Rhopalurus junceus (Caribbean blue scorpion).